The following is an 87-amino-acid chain: Beta-toxin Cn5 (87 aa).

An N-terminal signal peptide occupies residues 1 to 19; the sequence is MNSLLMITACLFLIGTVWA. The 66-residue stretch at 20–85 folds into the LCN-type CS-alpha/beta domain; that stretch reads KEGYLVNKST…TYPLPNKSCS (66 aa). Intrachain disulfides connect C31–C84, C35–C60, C44–C65, and C48–C67.

This sequence belongs to the long (4 C-C) scorpion toxin superfamily. Sodium channel inhibitor family. Beta subfamily. In terms of tissue distribution, expressed by the venom gland.

The protein localises to the secreted. Beta toxins bind voltage-independently at site-4 of sodium channels (Nav) and shift the voltage of activation toward more negative potentials thereby affecting sodium channel activation and promoting spontaneous and repetitive firing. This toxin is lethal to crustaceans (freshwater crayfish (Cambarellus montezumae spp.)), it provokes a reversible paralysis to insects (crickets (Achaeta spp.)), but is not toxic to mice. At high concentrations, it does displace the (beta) mammal-specific toxin Cn2 from rat brain synaptosomes. This is Beta-toxin Cn5 from Centruroides noxius (Mexican scorpion).